The sequence spans 197 residues: Holliday junction branch migration complex subunit RuvA (197 aa).

The tract at residues 1–64 (MYEYIKGKYI…EDFIGIYGFL (64 aa)) is domain I. Positions 65–143 (TKDELSMFKL…IDISEEDDEQ (79 aa)) are domain II. The segment at 144–148 (IINKV) is flexible linker. A domain III region spans residues 149–197 (TDDKKVLEAVAALVTLGYSEKEASKVINLCDKNNSLEQIIKEALKHLMK).

Belongs to the RuvA family. In terms of assembly, homotetramer. Forms an RuvA(8)-RuvB(12)-Holliday junction (HJ) complex. HJ DNA is sandwiched between 2 RuvA tetramers; dsDNA enters through RuvA and exits via RuvB. An RuvB hexamer assembles on each DNA strand where it exits the tetramer. Each RuvB hexamer is contacted by two RuvA subunits (via domain III) on 2 adjacent RuvB subunits; this complex drives branch migration. In the full resolvosome a probable DNA-RuvA(4)-RuvB(12)-RuvC(2) complex forms which resolves the HJ.

The protein resides in the cytoplasm. The RuvA-RuvB-RuvC complex processes Holliday junction (HJ) DNA during genetic recombination and DNA repair, while the RuvA-RuvB complex plays an important role in the rescue of blocked DNA replication forks via replication fork reversal (RFR). RuvA specifically binds to HJ cruciform DNA, conferring on it an open structure. The RuvB hexamer acts as an ATP-dependent pump, pulling dsDNA into and through the RuvAB complex. HJ branch migration allows RuvC to scan DNA until it finds its consensus sequence, where it cleaves and resolves the cruciform DNA. This chain is Holliday junction branch migration complex subunit RuvA, found in Clostridium botulinum (strain Loch Maree / Type A3).